The chain runs to 314 residues: Probable cell division protein WhiA (314 aa).

Residues 277 to 311 constitute a DNA-binding region (H-T-H motif); it reads TLKELGEKMPSGAISKSGINHRLRKLNQLAEGYQQ.

Belongs to the WhiA family.

In terms of biological role, involved in cell division and chromosome segregation. The protein is Probable cell division protein WhiA of Latilactobacillus sakei subsp. sakei (strain 23K) (Lactobacillus sakei subsp. sakei).